The following is a 286-amino-acid chain: Transcription factor bHLH137 (286 aa).

The segment covering 63-84 has biased composition (polar residues); it reads SGSEKLANTTKTATTGSSSCDQ. The interval 63–149 is disordered; the sequence is SGSEKLANTT…RGQATDSHSL (87 aa). One can recognise a bHLH domain in the interval 142-192; the sequence is QATDSHSLAERVRREKISERMRTLQNLVPGCDKVTGKALMLDEIINYVQTL.

Homodimer.

Its subcellular location is the nucleus. This Arabidopsis thaliana (Mouse-ear cress) protein is Transcription factor bHLH137 (BHLH137).